Reading from the N-terminus, the 359-residue chain is N-acetylhexosamine 1-kinase (359 aa).

The region spanning 21–359 (VTGIEPYGDG…IVADIMEAAR (339 aa)) is the Protein kinase domain.

It belongs to the protein kinase superfamily. Mg(2+) serves as cofactor.

It catalyses the reaction N-acetyl-D-hexosamine + ATP = N-acetyl-alpha-D-hexosamine 1-phosphate + ADP + H(+). Functionally, phosphorylates both N-acetylglucosamine (GlcNAc) and N-acetylgalactosamine (GalNAc) at similar rates. Involved in the lacto-N-biose I/galacto-N-biose (LNB/GNB) degradation pathway, which is important for host intestinal colonization by bifidobacteria. Also accepts GTP and ITP as phosphate donors. In vitro, can phosphorylate several GlcNAc and GalNAc derivatives. This is N-acetylhexosamine 1-kinase (nahK) from Bifidobacterium longum subsp. longum (strain ATCC 15707 / DSM 20219 / JCM 1217 / NCTC 11818 / E194b).